Reading from the N-terminus, the 239-residue chain is Tetratricopeptide repeat protein 9B (239 aa).

Disordered regions lie at residues 1 to 57 (MQRG…LGAA) and 99 to 126 (QGAR…SEEQ). Phosphoserine occurs at positions 7 and 27. The segment covering 16–31 (PEPPPRPPPALSPPGS) has biased composition (pro residues). Residues 65 to 99 (AVAFKAEGQRCYREKKFREAIGKYHRALLQLKAAQ) form a TPR 1 repeat. Over residues 106–116 (LPAPAPGPTSS) the composition is skewed to pro residues. The TPR 2 repeat unit spans residues 171–204 (FKATYRAGIAFYHLGDYARALRYLQEARSREPTD).

It belongs to the TTC9 family.

This is Tetratricopeptide repeat protein 9B (TTC9B) from Homo sapiens (Human).